The following is a 603-amino-acid chain: MSSEHIQNKLALLPDQPGCYLMKDRQGTIIYVGKAKILKNRVRSYFSGTHDSKTQRLVQEIVDFEYIVTSSNVEALLLEINLIKKHDPRFNIRLKDDKTYPFIKITNERHPRLIITRQVKKDKGKYFGPYPNVYAANEVKRILDRLYPLRKCSTLPNKVCLYYHLGQCLAPCVFDVEASKYKEMQDEIVAFLNGGYKTVKNDLMKKMQEAAENMEFEKAGEFRDQINAIETTMEKQKMTMNDFVDRDVFGYAIDKGWMCVQVFFIRQGKLIERDVSQFPFYNDADEDFLTFIGQFYQKANHIPPQEIYLPNDVDSEAVQAVVPDTKIIVPQRGNKKDLVKLAYKNAKIALNEKFMLLERNEERTVGAVERLGEAMGIPTPSRVEAFDNSNIHGTDPVSAMVTFLDGKPSKNDYRKYKIKTVEGPDDYATMREVIRRRYWRVLKEGLPMPDLILIDGGKGQIDSAKDVLTNELGLDIPVAGLAKDDKHRTSQLLFGDPLEIVPLERNSQEFYLLQRMQDEVHRFAITFHRQLRSKTGFQSILDGIPGVGPGRKKKLLKHFGSMKKLKEASIEEIKEAGVPLNVAEEVHKHITAFNEKAKNTEQK.

The region spanning 15–92 is the GIY-YIG domain; sequence DQPGCYLMKD…IKKHDPRFNI (78 aa). Residues 197–232 form the UVR domain; the sequence is KTVKNDLMKKMQEAAENMEFEKAGEFRDQINAIETT.

It belongs to the UvrC family. Interacts with UvrB in an incision complex.

The protein resides in the cytoplasm. Functionally, the UvrABC repair system catalyzes the recognition and processing of DNA lesions. UvrC both incises the 5' and 3' sides of the lesion. The N-terminal half is responsible for the 3' incision and the C-terminal half is responsible for the 5' incision. In Listeria monocytogenes serovar 1/2a (strain ATCC BAA-679 / EGD-e), this protein is UvrABC system protein C.